A 465-amino-acid chain; its full sequence is Lysosomal dipeptide transporter MFSD1 (465 aa).

Positions 1 to 23 (MEEEDEEARALLAGGPDEADRGA) are disordered. A Dileucine internalization motif motif is present at residues 11–12 (LL). The next 12 membrane-spanning stretches (helical) occupy residues 39-59 (LVHR…SYFC), 83-103 (LLYA…GFLI), 113-133 (TIIF…GGIF), 135-155 (AFWL…SLAV), 170-191 (LNLV…NMNL), 213-233 (ITLM…LALA), 266-286 (LWLI…FIGL), 304-324 (AINS…GLLV), 331-351 (IIWV…LAFT), 361-381 (LLGL…AFVV), 392-412 (FMQS…GMIL), and 418-438 (LFLE…VVLL).

It belongs to the major facilitator superfamily. In terms of assembly, homodimer. Interacts with lysosomal protein GLMP (via lumenal domain); the interaction starts while both proteins are still in the endoplasmic reticulum and is required for stabilization of MFSD1 in lysosomes but has no direct effect on its targeting to lysosomes or transporter activity.

It localises to the lysosome membrane. It catalyses the reaction L-alpha-aminoacyl-L-arginine(out) = L-alpha-aminoacyl-L-arginine(in). The enzyme catalyses L-arginyl-L-alpha-amino acid(out) = L-arginyl-L-alpha-amino acid(in). The catalysed reaction is L-arginyl-glycine(out) = L-arginyl-glycine(in). It carries out the reaction L-alpha-aminoacyl-L-lysine(out) = L-alpha-aminoacyl-L-lysine(in). It catalyses the reaction L-aspartyl-L-lysine(out) = L-aspartyl-L-lysine(in). The enzyme catalyses L-alanyl-L-lysine(out) = L-alanyl-L-lysine(in). The catalysed reaction is L-lysyl-L-alpha-amino acid(out) = L-lysyl-L-alpha-amino acid(in). It carries out the reaction L-lysyl-L-alanine(out) = L-lysyl-L-alanine(in). It catalyses the reaction L-lysyl-L-lysine(out) = L-lysyl-L-lysine(in). The enzyme catalyses L-lysyl-glycine(out) = L-lysyl-glycine(in). The catalysed reaction is L-alpha-aminoacyl-L-histidine(out) = L-alpha-aminoacyl-L-histidine(in). It carries out the reaction L-histidyl-L-alpha-amino acid(out) = L-histidyl-L-alpha-amino acid(in). It catalyses the reaction L-histidyl-glycine(out) = L-histidyl-glycine(in). In terms of biological role, lysosomal dipeptide uniporter that selectively exports lysine, arginine or histidine-containing dipeptides with a net positive charge from the lysosome lumen into the cytosol. Could play a role in a specific type of protein O-glycosylation indirectly regulating macrophages migration and tissue invasion. Also essential for liver homeostasis. The protein is Lysosomal dipeptide transporter MFSD1 of Pongo abelii (Sumatran orangutan).